The sequence spans 347 residues: tRNA N6-adenosine threonylcarbamoyltransferase (347 aa).

Fe cation-binding residues include His111 and His115. Residues 134–138 (LISGG), Asp167, Gly180, and Asn277 each bind substrate. Asp305 lines the Fe cation pocket.

The protein belongs to the KAE1 / TsaD family. The cofactor is Fe(2+).

Its subcellular location is the cytoplasm. The catalysed reaction is L-threonylcarbamoyladenylate + adenosine(37) in tRNA = N(6)-L-threonylcarbamoyladenosine(37) in tRNA + AMP + H(+). Required for the formation of a threonylcarbamoyl group on adenosine at position 37 (t(6)A37) in tRNAs that read codons beginning with adenine. Is involved in the transfer of the threonylcarbamoyl moiety of threonylcarbamoyl-AMP (TC-AMP) to the N6 group of A37, together with TsaE and TsaB. TsaD likely plays a direct catalytic role in this reaction. The sequence is that of tRNA N6-adenosine threonylcarbamoyltransferase from Actinobacillus pleuropneumoniae serotype 5b (strain L20).